We begin with the raw amino-acid sequence, 1030 residues long: uncharacterized protein (1030 aa).

A compositionally biased stretch (polar residues) spans 1–15; it reads MSENSTDSKNFQFSE. Residues 1-53 form a disordered region; it reads MSENSTDSKNFQFSEGSRESSNDELKVLLRDTETKEDEKSSFSNSEEESIIEN. The segment covering 16–40 has biased composition (basic and acidic residues); that stretch reads GSRESSNDELKVLLRDTETKEDEKS. The residue at position 41 (Ser41) is a Phosphoserine. The 157-residue stretch at 134–290 folds into the Helicase ATP-binding domain; the sequence is IKCVERMESV…WISEIHKQPC (157 aa). 147–154 provides a ligand contact to ATP; it reads AHTSAGKT. The DEVH box signature appears at 238-241; that stretch reads DEVH. Residues 357 to 561 enclose the Helicase C-terminal domain; it reads SLERIINMVL…GMILNLMRIE (205 aa).

The protein belongs to the helicase family. SKI2 subfamily.

The protein localises to the nucleus. This is an uncharacterized protein from Schizosaccharomyces pombe (strain 972 / ATCC 24843) (Fission yeast).